Reading from the N-terminus, the 2923-residue chain is Cadherin EGF LAG seven-pass G-type receptor 2 (2923 aa).

Residues 1 to 31 (MRSPATGVPLPTPPPPLLLLLLLLLPPPLLG) form the signal peptide. Residues 32–2380 (DQVGPCRSLG…GEILPLKTLT (2349 aa)) lie on the Extracellular side of the membrane. Residues 154-198 (PGLRAGERSPEESLGGRRKRNVNTAPQFQPPSYQATVPENQPAGT) form a disordered region. The segment covering 158–168 (AGERSPEESLG) has biased composition (basic and acidic residues). Over residues 175–196 (VNTAPQFQPPSYQATVPENQPA) the composition is skewed to polar residues. Cadherin domains are found at residues 182-289 (QPPS…DPVF), 290-399 (EQQE…APQF), 400-505 (SEKR…APIF), 506-610 (VSTP…NPTF), 611-712 (TQPE…RPVF), 713-815 (QSSH…APQF), 816-921 (LRDS…PPVF), 922-1023 (EQDE…PPVL), and 1028-1146 (ILFN…SPLL). N-linked (GlcNAc...) asparagine glycans are attached at residues asparagine 486, asparagine 557, and asparagine 701. Residues asparagine 1036, asparagine 1076, asparagine 1182, and asparagine 1212 are each glycosylated (N-linked (GlcNAc...) asparagine). Residues 1228–1286 (DDNICLREPCENYMRCVSVLRFDSSAPFIASSSVLFRPIHPVGGLRCRCPPGFTGDYCE) enclose the EGF-like 1; calcium-binding domain. 9 cysteine pairs are disulfide-bonded: cysteine 1232-cysteine 1243, cysteine 1237-cysteine 1274, cysteine 1276-cysteine 1285, cysteine 1292-cysteine 1303, cysteine 1297-cysteine 1312, cysteine 1314-cysteine 1323, cysteine 1332-cysteine 1343, cysteine 1337-cysteine 1353, and cysteine 1355-cysteine 1365. An EGF-like 2; calcium-binding domain is found at 1288-1324 (EVDLCYSRPCGPHGRCRSREGGYTCLCRDGYTGEHCE). One can recognise an EGF-like 3; calcium-binding domain in the interval 1328–1366 (RSGRCTPGVCKNGGTCVNLLVGGFKCDCPSGDFEKPYCQ). The region spanning 1367-1571 (VTTRSFPAHS…IANNGTVPGC (205 aa)) is the Laminin G-like 1 domain. N-linked (GlcNAc...) asparagine glycans are attached at residues asparagine 1501 and asparagine 1565. 4 disulfide bridges follow: cysteine 1545-cysteine 1571, cysteine 1578-cysteine 1589, cysteine 1583-cysteine 1598, and cysteine 1600-cysteine 1609. The 37-residue stretch at 1574-1610 (KKNVCDSNTCHNGGTCVNQWDAFSCECPLGFGGKSCA) folds into the EGF-like 4; calcium-binding domain. Asparagine 1591 carries the (3R)-3-hydroxyasparagine modification. One can recognise a Laminin G-like 2 domain in the interval 1614–1791 (ANPQHFLGSS…GESINVEQGC (178 aa)). Asparagine 1741 carries an N-linked (GlcNAc...) asparagine glycan. 14 cysteine pairs are disulfide-bonded: cysteine 1761/cysteine 1791, cysteine 1797/cysteine 1808, cysteine 1802/cysteine 1817, cysteine 1819/cysteine 1828, cysteine 1832/cysteine 1843, cysteine 1837/cysteine 1855, cysteine 1857/cysteine 1866, cysteine 1887/cysteine 1899, cysteine 1889/cysteine 1906, cysteine 1908/cysteine 1921, cysteine 1924/cysteine 1936, cysteine 1926/cysteine 1943, cysteine 1945/cysteine 1954, and cysteine 1957/cysteine 1969. Residues 1793 to 1828 (LPDPCDSNPCPANSYCSNDWDSYSCSCDPGYYGDNC) form the EGF-like 5; calcium-binding domain. A (3R)-3-hydroxyasparagine modification is found at asparagine 1810. N-linked (GlcNAc...) asparagine glycosylation occurs at asparagine 1827. An EGF-like 6; calcium-binding domain is found at 1829-1867 (TNVCDLNPCEHQSVCTRKPSAPHGYTCECPPNYLGPYCE). In terms of domain architecture, EGF-like 7; calcium-binding spans 1883-1922 (TCGPCNCDVSKGFDPDCNKTSGECHCKENHYRPPGSPTCL). Asparagine 1900 is a glycosylation site (N-linked (GlcNAc...) asparagine). Residues 1924–1971 (CDCYPTGSLSRVCDPEDGQCPCKPGVIGRQCDRCDNPFAEVTTNGCEV) enclose the Laminin EGF-like domain. N-linked (GlcNAc...) asparagine glycans are attached at residues asparagine 2024, asparagine 2043, and asparagine 2061. Residues 2199 to 2369 (ETTVILPESV…AVLMDVSRRE (171 aa)) enclose the GAIN-B domain. A disordered region spans residues 2213-2238 (PPVVRPAGPGEAQEPEELARRQRRHP). 2 disulfides stabilise this stretch: cysteine 2319–cysteine 2351 and cysteine 2339–cysteine 2353. The tract at residues 2319–2369 (CVFWNHSILVSGTGGWSARGCEVVFRNESHVSCQCNHMTSFAVLMDVSRRE) is GPS. Residues asparagine 2323 and asparagine 2345 are each glycosylated (N-linked (GlcNAc...) asparagine). Residues 2381–2401 (YVALGVTLAALLLTFFFLTLL) form a helical membrane-spanning segment. Topologically, residues 2402-2416 (RILRSNQHGIRRNLT) are cytoplasmic. A helical transmembrane segment spans residues 2417–2437 (AALGLAQLVFLLGINQADLPF). Position 2438 (alanine 2438) is a topological domain, extracellular. Residues 2439 to 2459 (CTVIAILLHFLYLCTFSWALL) form a helical membrane-spanning segment. Residues 2460-2480 (EALHLYRALTEVRDVNTGPMR) lie on the Cytoplasmic side of the membrane. The helical transmembrane segment at 2481–2501 (FYYMLGWGVPAFITGLAVGLD) threads the bilayer. At 2502 to 2519 (PEGYGNPDFCWLSIYDTL) the chain is on the extracellular side. A helical transmembrane segment spans residues 2520-2540 (IWSFAGPVAFAVSMSVFLYIL). Residues 2541–2560 (AARASCAAQRQGFEKKGPVS) lie on the Cytoplasmic side of the membrane. Residues 2561-2581 (GLQPSFAVLLLLSATWLLALL) form a helical membrane-spanning segment. At 2582–2591 (SVNSDTLLFH) the chain is on the extracellular side. A helical membrane pass occupies residues 2592–2612 (YLFATCNCIQGPFIFLSYVVL). At 2613-2923 (SKEVRKALKL…SEFLFFNFLH (311 aa)) the chain is on the cytoplasmic side. 2 disordered regions span residues 2688-2838 (SALN…HKGI) and 2854-2888 (LRLP…RQSL). 2 stretches are compositionally biased toward acidic residues: residues 2718-2730 (TDSD…EDDQ) and 2742-2753 (SEEEEEEEEEEA). The segment covering 2807-2819 (PEERLRENGDALS) has biased composition (basic and acidic residues). Residues 2863–2873 (GSSRGSSASEG) show a composition bias toward low complexity.

The protein belongs to the G-protein coupled receptor 2 family. LN-TM7 subfamily. Heterodimer of 2 chains generated by proteolytic processing; the large extracellular N-terminal fragment and the membrane-bound C-terminal fragment predominantly remain associated and non-covalently linked. The iron and 2-oxoglutarate dependent 3-hydroxylation of aspartate and asparagine is (R) stereospecific within EGF domains. Post-translationally, autoproteolytically processed at the GPS region of the GAIN-B domain; this cleavage modulates receptor activity. As to expression, highest expression in brain and testis.

The protein localises to the cell membrane. In terms of biological role, receptor that may have an important role in cell/cell signaling during nervous system formation. The polypeptide is Cadherin EGF LAG seven-pass G-type receptor 2 (Homo sapiens (Human)).